The primary structure comprises 552 residues: Two-component response regulator ARR10 (552 aa).

A Response regulatory domain is found at 18–133; the sequence is RVLAVDDDQT…ELKNIWQHVV (116 aa). Asp-69 carries the post-translational modification 4-aspartylphosphate. The disordered stretch occupies residues 139–181; sequence KKNKSNVSNGSGNCDKANRKRKEQYEEEEEEERGNDNDDPTAQ. Residues 151–173 are a coiled coil; that stretch reads NCDKANRKRKEQYEEEEEEERGN. Over residues 163 to 177 the composition is skewed to acidic residues; it reads YEEEEEEERGNDNDD. A Nuclear localization signal motif is present at residues 182–185; that stretch reads KKPR. Residues 185–235 constitute a DNA-binding region (myb-like GARP); it reads RVLWTHELHNKFLAAVDHLGVERAVPKKILDLMNVDKLTRENVASHLQKFR.

This sequence belongs to the ARR family. Type-B subfamily. Binds the target DNA as a monomer. Two-component system major event consists of a His-to-Asp phosphorelay between a sensor histidine kinase (HK) and a response regulator (RR). In plants, the His-to-Asp phosphorelay involves an additional intermediate named Histidine-containing phosphotransfer protein (HPt). This multistep phosphorelay consists of a His-Asp-His-Asp sequential transfer of a phosphate group between first a His and an Asp of the HK protein, followed by the transfer to a conserved His of the HPt protein and finally the transfer to an Asp in the receiver domain of the RR protein. As to expression, detected in the whole plant. Predominantly expressed in roots and leaves.

Its subcellular location is the nucleus. Its function is as follows. Transcriptional activator that binds specifically to the DNA sequence 5'-[AG]GATT-3'. Functions as a response regulator involved in His-to-Asp phosphorelay signal transduction system. Phosphorylation of the Asp residue in the receiver domain activates the ability of the protein to promote the transcription of target genes. Could directly activate some type-A response regulators in response to cytokinins. The chain is Two-component response regulator ARR10 (ARR10) from Arabidopsis thaliana (Mouse-ear cress).